The primary structure comprises 284 residues: MSEPAQPSEPAPALVALRGAAFAYEEGPDVLTGLDFAVREGRALALLGRNGSGKTTLMRLLSGGLKPHTGTLTLGGEPVAYDRKGLTRLRTTVQLVVQDPDDQLFAASVGQDVSFGPLNLGLSDAEVRSRVGEALAALDISGLAERPTHLLSYGQRKRTAIAGAVAMRPRVLILDEPTAGLDPDGQERLLATLDGLRAGGTTVVMATHDVDLALRWSDDAALLTPEGVRTGPTAATLARTDLLRRAGLRLPWGVAATGLLRARGLLADSATGPRTAEELAALAE.

Residues 15–250 (VALRGAAFAY…DLLRRAGLRL (236 aa)) form the ABC transporter domain. 48–55 (GRNGSGKT) is a binding site for ATP.

The protein belongs to the ABC transporter superfamily.

It localises to the cell membrane. In terms of biological role, probably part of an ABC transporter complex. Responsible for energy coupling to the transport system. The polypeptide is Putative ABC transporter ATP-binding protein SCO5958 (Streptomyces coelicolor (strain ATCC BAA-471 / A3(2) / M145)).